Reading from the N-terminus, the 202-residue chain is Small ribosomal subunit protein uS4 (202 aa).

The disordered stretch occupies residues 22-43 (TRKSARRAYPPGQHGQNRKKRS). The 63-residue stretch at 90 to 152 (MRLDNTVFRL…APSRKLVENN (63 aa)) folds into the S4 RNA-binding domain.

This sequence belongs to the universal ribosomal protein uS4 family. Part of the 30S ribosomal subunit. Contacts protein S5. The interaction surface between S4 and S5 is involved in control of translational fidelity.

In terms of biological role, one of the primary rRNA binding proteins, it binds directly to 16S rRNA where it nucleates assembly of the body of the 30S subunit. Its function is as follows. With S5 and S12 plays an important role in translational accuracy. The sequence is that of Small ribosomal subunit protein uS4 from Trichormus variabilis (strain ATCC 29413 / PCC 7937) (Anabaena variabilis).